We begin with the raw amino-acid sequence, 440 residues long: 23S rRNA (uracil(1939)-C(5))-methyltransferase RlmD (440 aa).

The TRAM domain occupies Ser-11–Lys-69. [4Fe-4S] cluster is bound by residues Cys-82, Cys-88, Cys-91, and Cys-169. S-adenosyl-L-methionine contacts are provided by Gln-272, Phe-301, Asn-306, Glu-322, Asn-349, and Asp-370. Catalysis depends on Cys-396, which acts as the Nucleophile.

Belongs to the class I-like SAM-binding methyltransferase superfamily. RNA M5U methyltransferase family. RlmD subfamily.

It carries out the reaction uridine(1939) in 23S rRNA + S-adenosyl-L-methionine = 5-methyluridine(1939) in 23S rRNA + S-adenosyl-L-homocysteine + H(+). In terms of biological role, catalyzes the formation of 5-methyl-uridine at position 1939 (m5U1939) in 23S rRNA. The chain is 23S rRNA (uracil(1939)-C(5))-methyltransferase RlmD from Vibrio cholerae serotype O1 (strain ATCC 39541 / Classical Ogawa 395 / O395).